Consider the following 413-residue polypeptide: Putative F-box protein At3g17560 (413 aa).

An F-box domain is found at 9–55 (TKLLFDLPQDVIEEIFSKVPVTCLRRIRSTCKRLYALLKDRGFIRKH).

The chain is Putative F-box protein At3g17560 from Arabidopsis thaliana (Mouse-ear cress).